We begin with the raw amino-acid sequence, 291 residues long: MAITAAMVKELRESTGAGMMDAKKALVENDGDMEAAVDWLRTKGLAKAAKKSGRTAAEGLVAVVVDGGKGVAVEVNSETDFVAKNGEFQTMVAGIAKAALSVNTVEELAEADLGGKTVATTLTDKIATIGENMTLRRMAKLEGETVVSYVHNAATDGMGKIGVLVALSGGDEAIGKQVAMHIAAVNPAALSEADLDPAIVEKERQVQIDIARESGKPEQVIEKMIEGRMKKFVAESTLLNQQFVVNPDLTVEAAAKEAGATVTGFIRVEVGEGIEVEKEDFAAEVAKAAQG.

An involved in Mg(2+) ion dislocation from EF-Tu region spans residues 79 to 82 (TDFV).

It belongs to the EF-Ts family.

The protein resides in the cytoplasm. In terms of biological role, associates with the EF-Tu.GDP complex and induces the exchange of GDP to GTP. It remains bound to the aminoacyl-tRNA.EF-Tu.GTP complex up to the GTP hydrolysis stage on the ribosome. The polypeptide is Elongation factor Ts (Ruegeria sp. (strain TM1040) (Silicibacter sp.)).